We begin with the raw amino-acid sequence, 554 residues long: (E)-beta-caryophyllene synthase (554 aa).

Mn(2+) contacts are provided by D313 and D317. The DDXXD motif signature appears at 313–317 (DDIYD). Homodimerization stretches follow at residues 319-325 (YGTLDEL) and 391-427 (EAQW…LAVI). Mn(2+) contacts are provided by D457 and E465.

Belongs to the terpene synthase family. As to quaternary structure, homodimer. It depends on Mn(2+) as a cofactor. Mg(2+) serves as cofactor. As to expression, expressed in peltate glandular trichomes. Present at low levels in flowers, leaves and stems.

It catalyses the reaction (2E,6E)-farnesyl diphosphate = (-)-(E)-beta-caryophyllene + diphosphate. The enzyme catalyses (2E,6E)-farnesyl diphosphate = alpha-humulene + diphosphate. It functions in the pathway secondary metabolite biosynthesis; terpenoid biosynthesis. Its function is as follows. Involved in the biosynthesis of phenolic sesquiterpenes natural products. Sesquiterpene synthase converting (2E,6E)-farnesyl diphosphate (FPP) to (E)-beta-caryophyllene and alpha-humulene. The sequence is that of (E)-beta-caryophyllene synthase from Origanum vulgare (Wild marjoram).